Consider the following 407-residue polypeptide: Proteasome-activating nucleotidase (407 aa).

Positions lysine 22 to isoleucine 67 form a coiled coil. Residues glycine 192–leucine 197 and histidine 331 contribute to the ATP site. The tract at residues methionine 405–glycine 407 is docks into pockets in the proteasome alpha-ring to cause gate opening.

The protein belongs to the AAA ATPase family. Homohexamer. The hexameric complex has a two-ring architecture resembling a top hat that caps the 20S proteasome core at one or both ends. Upon ATP-binding, the C-terminus of PAN interacts with the alpha-rings of the proteasome core by binding to the intersubunit pockets.

The protein localises to the cytoplasm. In terms of biological role, ATPase which is responsible for recognizing, binding, unfolding and translocation of substrate proteins into the archaeal 20S proteasome core particle. Is essential for opening the gate of the 20S proteasome via an interaction with its C-terminus, thereby allowing substrate entry and access to the site of proteolysis. Thus, the C-termini of the proteasomal ATPase function like a 'key in a lock' to induce gate opening and therefore regulate proteolysis. Unfolding activity requires energy from ATP hydrolysis, whereas ATP binding alone promotes ATPase-20S proteasome association which triggers gate opening, and supports translocation of unfolded substrates. In Methanococcus maripaludis (strain C6 / ATCC BAA-1332), this protein is Proteasome-activating nucleotidase.